A 363-amino-acid chain; its full sequence is Zinc finger CCCH domain-containing protein 53 (363 aa).

A C3H1-type zinc finger spans residues 154 to 181 (KNRPKICSFYTIGQCKRGAECSFRHEMP). Positions 225 to 310 (KTLYVGGLNS…PPNEYSHYPS (86 aa)) constitute an RRM domain. The interval 281-348 (LISQQQNQHS…SYSYPMPPHQ (68 aa)) is disordered. Over residues 283-297 (SQQQNQHSQMQQYYM) the composition is skewed to low complexity. Residues 320–336 (FSTQESDGSSTSENNRA) are compositionally biased toward polar residues.

In Arabidopsis thaliana (Mouse-ear cress), this protein is Zinc finger CCCH domain-containing protein 53.